Reading from the N-terminus, the 430-residue chain is 3-phosphoshikimate 1-carboxyvinyltransferase (430 aa).

Lysine 33, serine 34, and arginine 38 together coordinate 3-phosphoshikimate. Residue lysine 33 participates in phosphoenolpyruvate binding. Phosphoenolpyruvate is bound by residues glycine 101 and arginine 129. 3-phosphoshikimate-binding residues include serine 172, serine 173, glutamine 174, serine 201, glutamate 319, and histidine 346. Glutamine 174 lines the phosphoenolpyruvate pocket. Glutamate 319 (proton acceptor) is an active-site residue. Residues arginine 350, arginine 391, and lysine 416 each coordinate phosphoenolpyruvate.

Belongs to the EPSP synthase family. Monomer.

Its subcellular location is the cytoplasm. The enzyme catalyses 3-phosphoshikimate + phosphoenolpyruvate = 5-O-(1-carboxyvinyl)-3-phosphoshikimate + phosphate. It functions in the pathway metabolic intermediate biosynthesis; chorismate biosynthesis; chorismate from D-erythrose 4-phosphate and phosphoenolpyruvate: step 6/7. Catalyzes the transfer of the enolpyruvyl moiety of phosphoenolpyruvate (PEP) to the 5-hydroxyl of shikimate-3-phosphate (S3P) to produce enolpyruvyl shikimate-3-phosphate and inorganic phosphate. The protein is 3-phosphoshikimate 1-carboxyvinyltransferase of Corynebacterium glutamicum (strain R).